Reading from the N-terminus, the 131-residue chain is Small ribosomal subunit protein uS8 (131 aa).

Belongs to the universal ribosomal protein uS8 family. As to quaternary structure, part of the 30S ribosomal subunit. Contacts proteins S5 and S12.

In terms of biological role, one of the primary rRNA binding proteins, it binds directly to 16S rRNA central domain where it helps coordinate assembly of the platform of the 30S subunit. The chain is Small ribosomal subunit protein uS8 from Helicobacter pylori (strain P12).